The chain runs to 528 residues: Na(+)/H(+) antiporter NhaB (528 aa).

Transmembrane regions (helical) follow at residues 10–30 (IGNF…SFLI), 63–83 (YPLQ…MTSA), 96–116 (VLLL…LLLF), 131–165 (VSLM…FYAI), 204–224 (LLMH…VGEP), 240–260 (FVIR…LTCL), 305–325 (VLVG…VGLV), 359–379 (LAVF…APVI), 391–411 (LVIF…VFVG), 449–469 (ATPN…APLI), and 476–496 (MVWM…LAIE).

This sequence belongs to the NhaB Na(+)/H(+) (TC 2.A.34) antiporter family.

The protein localises to the cell inner membrane. It catalyses the reaction 2 Na(+)(in) + 3 H(+)(out) = 2 Na(+)(out) + 3 H(+)(in). Its function is as follows. Na(+)/H(+) antiporter that extrudes sodium in exchange for external protons. The protein is Na(+)/H(+) antiporter NhaB of Shewanella putrefaciens (strain CN-32 / ATCC BAA-453).